Here is an 802-residue protein sequence, read N- to C-terminus: Elongation factor G, mitochondrial (802 aa).

The transit peptide at 1-24 (MRYPSLARLPRRALSGLARAPVRL) directs the protein to the mitochondrion. Residues 100 to 387 (SRVRNIGIAA…GVIDYLPNPS (288 aa)) enclose the tr-type G domain. GTP contacts are provided by residues 109-116 (AHIDSGKT), 185-189 (DTPGH), and 239-242 (NKMD).

It belongs to the TRAFAC class translation factor GTPase superfamily. Classic translation factor GTPase family. EF-G/EF-2 subfamily.

The protein localises to the mitochondrion. It participates in protein biosynthesis; polypeptide chain elongation. Its function is as follows. Mitochondrial GTPase that catalyzes the GTP-dependent ribosomal translocation step during translation elongation. During this step, the ribosome changes from the pre-translocational (PRE) to the post-translocational (POST) state as the newly formed A-site-bound peptidyl-tRNA and P-site-bound deacylated tRNA move to the P and E sites, respectively. Catalyzes the coordinated movement of the two tRNA molecules, the mRNA and conformational changes in the ribosome. This Aspergillus terreus (strain NIH 2624 / FGSC A1156) protein is Elongation factor G, mitochondrial (mef1).